The following is an 864-amino-acid chain: Probable M1 family aminopeptidase 2 (864 aa).

Substrate-binding positions include Glu-149 and 289-293; that span reads GAMEN. Zn(2+) is bound at residue His-325. Catalysis depends on Glu-326, which acts as the Proton acceptor. 2 residues coordinate Zn(2+): His-329 and Glu-348.

The protein belongs to the peptidase M1 family. The cofactor is Zn(2+).

The polypeptide is Probable M1 family aminopeptidase 2 (Encephalitozoon cuniculi (strain GB-M1) (Microsporidian parasite)).